Here is a 490-residue protein sequence, read N- to C-terminus: Argininosuccinate lyase (490 aa).

Belongs to the lyase 1 family. Argininosuccinate lyase subfamily.

It is found in the cytoplasm. It catalyses the reaction 2-(N(omega)-L-arginino)succinate = fumarate + L-arginine. It participates in amino-acid biosynthesis; L-arginine biosynthesis; L-arginine from L-ornithine and carbamoyl phosphate: step 3/3. The protein is Argininosuccinate lyase of Bifidobacterium longum subsp. infantis (strain ATCC 15697 / DSM 20088 / JCM 1222 / NCTC 11817 / S12).